Reading from the N-terminus, the 398-residue chain is Beta-1,4-galactosyltransferase 1 (398 aa).

At 1 to 24 the chain is on the cytoplasmic side; the sequence is MRLREPLLSGSAAMPGASLQRACR. Residues 25-44 traverse the membrane as a helical; Signal-anchor for type II membrane protein segment; that stretch reads LLVAVCALHLGVTLVYYLAG. Topologically, residues 45–398 are lumenal; that stretch reads RDLSRLPQLV…QITVDIGTPS (354 aa). The span at 61–76 shows a compositional bias: polar residues; that stretch reads QGGSNSAAAIGQSSGE. The disordered stretch occupies residues 61 to 117; sequence QGGSNSAAAIGQSSGELRTGGARPPPPLGASSQPRPGGDSSPVVDSGPGPASNLTSV. A glycan (N-linked (GlcNAc...) asparagine) is linked at Asn-113. A disulfide bond links Cys-130 and Cys-172. UDP-alpha-D-galactose-binding positions include 183–187, 222–224, 249–250, and Trp-310; these read PFRNR, FNR, and VD. Cys-243 and Cys-262 are oxidised to a cystine. Asp-250 is a Mn(2+) binding site. 312 to 315 is an N-acetyl-D-glucosamine binding site; the sequence is GEDD. His-343 is a Mn(2+) binding site. A UDP-alpha-D-galactose-binding site is contributed by 343–346; that stretch reads HSRD. Residue Arg-355 coordinates N-acetyl-D-glucosamine.

It belongs to the glycosyltransferase 7 family. In terms of assembly, homodimer; and heterodimer with alpha-lactalbumin to form lactose synthase. Interacts (via N-terminal cytoplasmic domain) with UBE2Q1 (via N-terminus); the interaction is direct. It depends on Mn(2+) as a cofactor. The soluble form derives from the membrane forms by proteolytic processing. As to expression, ubiquitously expressed, but at very low levels in fetal and adult brain.

Its subcellular location is the golgi apparatus. The protein localises to the golgi stack membrane. It is found in the cell membrane. It localises to the cell surface. The protein resides in the cell projection. Its subcellular location is the filopodium. The protein localises to the secreted. It carries out the reaction D-glucose + UDP-alpha-D-galactose = lactose + UDP + H(+). It catalyses the reaction an N-acetyl-beta-D-glucosaminyl derivative + UDP-alpha-D-galactose = a beta-D-galactosyl-(1-&gt;4)-N-acetyl-beta-D-glucosaminyl derivative + UDP + H(+). The catalysed reaction is N-acetyl-D-glucosamine + UDP-alpha-D-galactose = beta-D-galactosyl-(1-&gt;4)-N-acetyl-D-glucosamine + UDP + H(+). The enzyme catalyses a beta-D-GlcNAc-(1-&gt;3)-beta-D-Gal-(1-&gt;4)-beta-D-Glc-(1&lt;-&gt;1)-Cer(d18:1(4E)) + UDP-alpha-D-galactose = a neolactoside nLc4Cer(d18:1(4E)) + UDP + H(+). It carries out the reaction a beta-D-glucosylceramide + UDP-alpha-D-galactose = a beta-D-galactosyl-(1-&gt;4)-beta-D-glucosyl-(1&lt;-&gt;1)-ceramide + UDP + H(+). It catalyses the reaction a neolactoside IV(3)-beta-GlcNAc-nLc4Cer + UDP-alpha-D-galactose = a neolactoside nLc6Cer + UDP + H(+). It participates in protein modification; protein glycosylation. In terms of biological role, the Golgi complex form catalyzes the production of lactose in the lactating mammary gland and could also be responsible for the synthesis of complex-type N-linked oligosaccharides in many glycoproteins as well as the carbohydrate moieties of glycolipids. Its function is as follows. The cell surface form functions as a recognition molecule during a variety of cell to cell and cell to matrix interactions, as those occurring during development and egg fertilization, by binding to specific oligosaccharide ligands on opposing cells or in the extracellular matrix. The polypeptide is Beta-1,4-galactosyltransferase 1 (Homo sapiens (Human)).